A 460-amino-acid polypeptide reads, in one-letter code: uncharacterized protein (460 aa).

Positions 6–64 (PVKKNSTYNLYITGMGTKGEGIGKINNFTIFVTGAILGEEVEVNIIKVNKNYAVGKLLN) constitute a TRAM domain. 4 residues coordinate [4Fe-4S] cluster: C77, C83, C86, and C163. Residues Q287, Y316, E337, and D385 each contribute to the S-adenosyl-L-methionine site. The Nucleophile role is filled by C412.

It belongs to the class I-like SAM-binding methyltransferase superfamily. RNA M5U methyltransferase family.

This is an uncharacterized protein from Clostridium tetani (strain Massachusetts / E88).